A 158-amino-acid polypeptide reads, in one-letter code: Protein NrdI (158 aa).

The protein belongs to the NrdI family.

Probably involved in ribonucleotide reductase function. This is Protein NrdI from Rhodococcus jostii (strain RHA1).